The following is a 292-amino-acid chain: MATLKELKQKISSVKNTQKTTRAMKLVSTAKLKRAEEAIMRSREYARKIDEVMHEISAKLASVKDSIELRAFAKIENVEKVDVIVITADKGLCGGFNIQTIKQTIKLIEELKEKKVKIRLKVIGKKAIEYFKFVGIDMYEEVIGLSAAPNYEKAAELIQKSYEDFVNEEIDNIITIHNGYVNKLTQQVYVKELLPIEVDVNDSQEFLEVEPDNDYETILETLVKKYIEYSLYYALLDSLAAEHSARMQAMDAATNNAKEMVHQLTLEFNKARQEAVTRELIEIVTAIEAMKK.

This sequence belongs to the ATPase gamma chain family. As to quaternary structure, F-type ATPases have 2 components, CF(1) - the catalytic core - and CF(0) - the membrane proton channel. CF(1) has five subunits: alpha(3), beta(3), gamma(1), delta(1), epsilon(1). CF(0) has three main subunits: a, b and c.

Its subcellular location is the cell inner membrane. In terms of biological role, produces ATP from ADP in the presence of a proton gradient across the membrane. The gamma chain is believed to be important in regulating ATPase activity and the flow of protons through the CF(0) complex. The protein is ATP synthase gamma chain of Nautilia profundicola (strain ATCC BAA-1463 / DSM 18972 / AmH).